The sequence spans 1447 residues: DNA-directed RNA polymerase subunit beta' (1447 aa).

The Zn(2+) site is built by Cys-70, Cys-72, Cys-85, and Cys-88. 3 residues coordinate Mg(2+): Asp-460, Asp-462, and Asp-464. The Zn(2+) site is built by Cys-890, Cys-964, Cys-971, and Cys-974.

Belongs to the RNA polymerase beta' chain family. In terms of assembly, the RNAP catalytic core consists of 2 alpha, 1 beta, 1 beta' and 1 omega subunit. When a sigma factor is associated with the core the holoenzyme is formed, which can initiate transcription. Mg(2+) serves as cofactor. Zn(2+) is required as a cofactor.

The catalysed reaction is RNA(n) + a ribonucleoside 5'-triphosphate = RNA(n+1) + diphosphate. Its function is as follows. DNA-dependent RNA polymerase catalyzes the transcription of DNA into RNA using the four ribonucleoside triphosphates as substrates. In Desulfosudis oleivorans (strain DSM 6200 / JCM 39069 / Hxd3) (Desulfococcus oleovorans), this protein is DNA-directed RNA polymerase subunit beta'.